A 392-amino-acid chain; its full sequence is Phosphopentomutase (392 aa).

Mn(2+)-binding residues include aspartate 10, aspartate 282, histidine 287, aspartate 323, histidine 324, and histidine 335.

Belongs to the phosphopentomutase family. Requires Mn(2+) as cofactor.

The protein localises to the cytoplasm. It carries out the reaction 2-deoxy-alpha-D-ribose 1-phosphate = 2-deoxy-D-ribose 5-phosphate. The catalysed reaction is alpha-D-ribose 1-phosphate = D-ribose 5-phosphate. It functions in the pathway carbohydrate degradation; 2-deoxy-D-ribose 1-phosphate degradation; D-glyceraldehyde 3-phosphate and acetaldehyde from 2-deoxy-alpha-D-ribose 1-phosphate: step 1/2. Its function is as follows. Isomerase that catalyzes the conversion of deoxy-ribose 1-phosphate (dRib-1-P) and ribose 1-phosphate (Rib-1-P) to deoxy-ribose 5-phosphate (dRib-5-P) and ribose 5-phosphate (Rib-5-P), respectively. The polypeptide is Phosphopentomutase (Dictyoglomus thermophilum (strain ATCC 35947 / DSM 3960 / H-6-12)).